We begin with the raw amino-acid sequence, 890 residues long: Bacteriocin BCN5 (890 aa).

2 consecutive SH3b domains span residues P22 to T84 and E179 to T241. The Peptidase M14 domain occupies G303–V549. The Zn(2+) site is built by H358, E361, and H475. The active-site Proton donor/acceptor is E525. One can recognise an SH3b 3 domain in the interval E572–K636. Positions K815–V869 are hydrophobic.

It depends on Zn(2+) as a cofactor.

Functionally, may function as an ionophore. In Clostridium perfringens, this protein is Bacteriocin BCN5 (bcn).